The primary structure comprises 83 residues: Small ribosomal subunit protein eS21 (83 aa).

Belongs to the eukaryotic ribosomal protein eS21 family. Component of the 40S small ribosomal subunit. Interacts with sta.

It localises to the cytoplasm. Its subcellular location is the cytosol. The protein localises to the rough endoplasmic reticulum. In terms of biological role, may be an associated component of the ribosome rather than a core structural subunit. May act as a translation initiation factor. Has a role in regulation of cell proliferation in the hematopoietic organs and the imaginal disks of larva. This chain is Small ribosomal subunit protein eS21 (RpS21), found in Drosophila grimshawi (Hawaiian fruit fly).